Reading from the N-terminus, the 792-residue chain is Probable exo-1,4-beta-xylosidase xlnD (792 aa).

The N-terminal stretch at 1-20 (MSVAKSIAAVLVALLPGALA) is a signal peptide. Asparagine 23, asparagine 87, asparagine 118, asparagine 142, and asparagine 246 each carry an N-linked (GlcNAc...) asparagine glycan. Residue aspartate 310 is part of the active site. N-linked (GlcNAc...) asparagine glycans are attached at residues asparagine 326, asparagine 385, asparagine 404, asparagine 440, asparagine 477, asparagine 518, asparagine 679, and asparagine 701.

This sequence belongs to the glycosyl hydrolase 3 family.

It localises to the secreted. The catalysed reaction is Hydrolysis of (1-&gt;4)-beta-D-xylans, to remove successive D-xylose residues from the non-reducing termini.. Its pathway is glycan degradation; xylan degradation. Functionally, xylan 1,4-beta-xylosidase involved in the hydrolysis of xylan, a major structural heterogeneous polysaccharide found in plant biomass representing the second most abundant polysaccharide in the biosphere, after cellulose. The sequence is that of Probable exo-1,4-beta-xylosidase xlnD (xlnD) from Aspergillus fumigatus (strain ATCC MYA-4609 / CBS 101355 / FGSC A1100 / Af293) (Neosartorya fumigata).